A 137-amino-acid polypeptide reads, in one-letter code: Nucleoside diphosphate kinase (137 aa).

The ATP site is built by K10, F58, R86, T92, R103, and N113. The active-site Pros-phosphohistidine intermediate is H116.

The protein belongs to the NDK family. In terms of assembly, homotetramer. Requires Mg(2+) as cofactor.

The protein resides in the cytoplasm. The catalysed reaction is a 2'-deoxyribonucleoside 5'-diphosphate + ATP = a 2'-deoxyribonucleoside 5'-triphosphate + ADP. It catalyses the reaction a ribonucleoside 5'-diphosphate + ATP = a ribonucleoside 5'-triphosphate + ADP. Major role in the synthesis of nucleoside triphosphates other than ATP. The ATP gamma phosphate is transferred to the NDP beta phosphate via a ping-pong mechanism, using a phosphorylated active-site intermediate. The polypeptide is Nucleoside diphosphate kinase (Helicobacter pylori (strain P12)).